Here is a 141-residue protein sequence, read N- to C-terminus: ATP synthase epsilon chain (141 aa).

This sequence belongs to the ATPase epsilon chain family. As to quaternary structure, F-type ATPases have 2 components, CF(1) - the catalytic core - and CF(0) - the membrane proton channel. CF(1) has five subunits: alpha(3), beta(3), gamma(1), delta(1), epsilon(1). CF(0) has three main subunits: a, b and c.

The protein localises to the cell inner membrane. In terms of biological role, produces ATP from ADP in the presence of a proton gradient across the membrane. This is ATP synthase epsilon chain from Thioalkalivibrio sulfidiphilus (strain HL-EbGR7).